Here is a 542-residue protein sequence, read N- to C-terminus: Sterile alpha motif domain-containing protein 11 (542 aa).

A disordered region spans residues leucine 268–leucine 364. A compositionally biased stretch (pro residues) spans proline 273 to proline 285. At threonine 342 the chain carries Phosphothreonine. Residues tryptophan 404–valine 469 enclose the SAM domain. The interval leucine 486–glutamine 542 is disordered. Serine 499 bears the Phosphoserine mark. Residues serine 499–glycine 526 show a composition bias toward polar residues.

In terms of assembly, self-associates. Component of a Polycomb group (PcG) multiprotein PRC1-like complex. Interacts with SAMD7 and PHC2. As to expression, expressed in the outer nuclear layer of rod photoreceptors in the retina (at protein level). Predominantly expressed in retinal photoreceptors and pineal gland.

The protein resides in the nucleus. Its function is as follows. Component of a Polycomb group (PcG) multiprotein PRC1-like complex, essential for establishing rod photoreceptor cell identity and function by silencing nonrod gene expression in developing rod photoreceptor cells. This chain is Sterile alpha motif domain-containing protein 11 (Samd11), found in Mus musculus (Mouse).